We begin with the raw amino-acid sequence, 549 residues long: Glucose-6-phosphate isomerase (549 aa).

N6-acetyllysine occurs at positions 80, 228, and 234. Glutamate 355 acts as the Proton donor in catalysis. Catalysis depends on residues histidine 386 and lysine 514.

Belongs to the GPI family.

The protein localises to the cytoplasm. The catalysed reaction is alpha-D-glucose 6-phosphate = beta-D-fructose 6-phosphate. The protein operates within carbohydrate biosynthesis; gluconeogenesis. It functions in the pathway carbohydrate degradation; glycolysis; D-glyceraldehyde 3-phosphate and glycerone phosphate from D-glucose: step 2/4. In terms of biological role, catalyzes the reversible isomerization of glucose-6-phosphate to fructose-6-phosphate. The protein is Glucose-6-phosphate isomerase of Escherichia coli O127:H6 (strain E2348/69 / EPEC).